We begin with the raw amino-acid sequence, 51 residues long: Suberization-associated anionic peroxidase 1 (51 aa).

A heme-binding site is contributed by histidine 30. Threonine 31 contacts Ca(2+).

This sequence belongs to the peroxidase family. Classical plant (class III) peroxidase subfamily. Requires heme b as cofactor. Ca(2+) is required as a cofactor.

It localises to the secreted. The enzyme catalyses 2 a phenolic donor + H2O2 = 2 a phenolic radical donor + 2 H2O. Functionally, removal of H(2)O(2), oxidation of toxic reductants, biosynthesis and degradation of lignin, suberization, auxin catabolism, response to environmental stresses such as wounding, pathogen attack and oxidative stress. These functions might be dependent on each isozyme/isoform in each plant tissue. Suggested to catalyze the deposition of the aromatic residues of suberin on the cell wall and thus play a role in cell-suberization. The chain is Suberization-associated anionic peroxidase 1 from Capsicum annuum (Capsicum pepper).